Reading from the N-terminus, the 294-residue chain is Indole-3-glycerol phosphate synthase (294 aa).

It belongs to the TrpC family.

The enzyme catalyses 1-(2-carboxyphenylamino)-1-deoxy-D-ribulose 5-phosphate + H(+) = (1S,2R)-1-C-(indol-3-yl)glycerol 3-phosphate + CO2 + H2O. Its pathway is amino-acid biosynthesis; L-tryptophan biosynthesis; L-tryptophan from chorismate: step 4/5. In Crocosphaera subtropica (strain ATCC 51142 / BH68) (Cyanothece sp. (strain ATCC 51142)), this protein is Indole-3-glycerol phosphate synthase.